The following is a 192-amino-acid chain: Segregation and condensation protein B (192 aa).

This sequence belongs to the ScpB family. In terms of assembly, homodimer. Homodimerization may be required to stabilize the binding of ScpA to the Smc head domains. Component of a cohesin-like complex composed of ScpA, ScpB and the Smc homodimer, in which ScpA and ScpB bind to the head domain of Smc. The presence of the three proteins is required for the association of the complex with DNA.

Its subcellular location is the cytoplasm. Participates in chromosomal partition during cell division. May act via the formation of a condensin-like complex containing Smc and ScpA that pull DNA away from mid-cell into both cell halves. This is Segregation and condensation protein B from Oceanobacillus iheyensis (strain DSM 14371 / CIP 107618 / JCM 11309 / KCTC 3954 / HTE831).